A 526-amino-acid chain; its full sequence is CTP synthase (526 aa).

The tract at residues 1 to 264 is amidoligase domain; that stretch reads MPQRFIVVTG…HKLIAKELDI (264 aa). Ser14 provides a ligand contact to CTP. Ser14 is a UTP binding site. Residues 15–20 and Asp72 contribute to the ATP site; that span reads GIGKGI. The Mg(2+) site is built by Asp72 and Glu138. CTP is bound by residues 145–147, 185–190, and Lys221; these read DIE and KTKPTQ. Residues 185–190 and Lys221 contribute to the UTP site; that span reads KTKPTQ. Residues 282–526 enclose the Glutamine amidotransferase type-1 domain; it reads KIGIVGKYLG…VKAAGGKIND (245 aa). Residue Gly342 participates in L-glutamine binding. Cys369 acts as the Nucleophile; for glutamine hydrolysis in catalysis. L-glutamine is bound by residues 370 to 373, Glu393, and Arg451; that span reads LGMQ. Catalysis depends on residues His499 and Glu501.

This sequence belongs to the CTP synthase family. In terms of assembly, homotetramer.

It catalyses the reaction UTP + L-glutamine + ATP + H2O = CTP + L-glutamate + ADP + phosphate + 2 H(+). The enzyme catalyses L-glutamine + H2O = L-glutamate + NH4(+). The catalysed reaction is UTP + NH4(+) + ATP = CTP + ADP + phosphate + 2 H(+). The protein operates within pyrimidine metabolism; CTP biosynthesis via de novo pathway; CTP from UDP: step 2/2. With respect to regulation, allosterically activated by GTP, when glutamine is the substrate; GTP has no effect on the reaction when ammonia is the substrate. The allosteric effector GTP functions by stabilizing the protein conformation that binds the tetrahedral intermediate(s) formed during glutamine hydrolysis. Inhibited by the product CTP, via allosteric rather than competitive inhibition. Its function is as follows. Catalyzes the ATP-dependent amination of UTP to CTP with either L-glutamine or ammonia as the source of nitrogen. Regulates intracellular CTP levels through interactions with the four ribonucleotide triphosphates. The sequence is that of CTP synthase from Thermosipho africanus (strain TCF52B).